The chain runs to 164 residues: Ubiquitin-fold modifier-conjugating enzyme 1 (164 aa).

Cys-116 functions as the Glycyl thioester intermediate in the catalytic mechanism.

It belongs to the ubiquitin-conjugating enzyme family. UFC1 subfamily.

In terms of biological role, E2-like enzyme which forms an intermediate with UFM1 via a thioester linkage. In Drosophila sechellia (Fruit fly), this protein is Ubiquitin-fold modifier-conjugating enzyme 1.